The sequence spans 466 residues: Tyrosinase HcTyr1 (466 aa).

Cu cation is bound by residues H43, H78, H87, H211, H215, and H238.

The protein belongs to the tyrosinase family. In terms of assembly, monomer. Formation of a dimer is observed when the protein is in its holo-form. Cu(2+) serves as cofactor. Post-translationally, in vitro, the C-terminal lid-domain is slowly cleaved off in an autoprocessive time dependent manner, leading to the formation of cleaved-HcTyr1. The processing rate is not influenced by factors such as pH and added metal ions.

The catalysed reaction is L-tyrosine + O2 = L-dopaquinone + H2O. It catalyses the reaction 2 L-tyrosine + O2 = 2 L-dopa. The enzyme catalyses 2 L-dopa + O2 = 2 L-dopaquinone + 2 H2O. Its activity is regulated as follows. Cleavage of the lid-domain increases activity levels, affinity for substrate and turnover rate. Exhibits high saline tolerance. Functionally, copper-containing oxidase that catalyzes the conversion of L-tyrosine to L-dopa and then to L-dopaquinone. Can use various phenols such as p-coumaric acid, phenol, pyrocatechol, syringol or pyrogallol. Accepts several of the constituents of lignin and potentially participates in lignin functionalization. This is Tyrosinase HcTyr1 from Hahella sp. (strain CCB-MM4).